A 391-amino-acid polypeptide reads, in one-letter code: Multidrug resistance protein MdtL (391 aa).

12 consecutive transmembrane segments (helical) span residues 4 to 24 (FLICSFALVLLYPAGIDMYLV), 42 to 62 (IAFSVYLAGMAAAMLFAGKVA), 69 to 89 (PVAIPGAALFIIASVFCSLAE), 93 to 113 (LFLAGRFLQGLGAGCCYVVAF), 131 to 151 (LLNGITCIIPVLAPVLGHLIM), 158 to 178 (SLFWAMATMGIAVLMLSLFIL), 203 to 222 (FFLSRVVITTLSVSVILTFV), 245 to 265 (ALTAGVSMTVSFSTPFALGIF), 269 to 289 (TLMITSQVLFLAAGITLAVSP), 293 to 313 (ISLFGITLICAGFSIGFGVAM), 324 to 346 (AGVASSTLGIAQVCGSSLWIWLA), and 363 to 383 (ACSIVSLLLIMFVTPGRPVAA).

Belongs to the major facilitator superfamily. DHA1 family. MdtL (TC 2.A.1.2.22) subfamily.

It localises to the cell inner membrane. Confers resistance to chloramphenicol. The polypeptide is Multidrug resistance protein MdtL (Escherichia fergusonii (strain ATCC 35469 / DSM 13698 / CCUG 18766 / IAM 14443 / JCM 21226 / LMG 7866 / NBRC 102419 / NCTC 12128 / CDC 0568-73)).